We begin with the raw amino-acid sequence, 61 residues long: uncharacterized protein (61 aa).

Positions 1 to 28 (MHRRARRMPMRPRRSKRVRNRYTMGTFA) are cleaved as a signal peptide.

This is an uncharacterized protein from Mycobacterium tuberculosis (strain ATCC 25618 / H37Rv).